The sequence spans 444 residues: N-succinylarginine dihydrolase (444 aa).

Substrate-binding positions include 19–28 (SGLSVGNIAS), Asn110, and 137–138 (HR). Glu174 is a catalytic residue. Position 214 (Arg214) interacts with substrate. His250 is a catalytic residue. Residues Asp252 and Asn362 each coordinate substrate. Cys368 serves as the catalytic Nucleophile.

The protein belongs to the succinylarginine dihydrolase family. Homodimer.

The enzyme catalyses N(2)-succinyl-L-arginine + 2 H2O + 2 H(+) = N(2)-succinyl-L-ornithine + 2 NH4(+) + CO2. It participates in amino-acid degradation; L-arginine degradation via AST pathway; L-glutamate and succinate from L-arginine: step 2/5. Functionally, catalyzes the hydrolysis of N(2)-succinylarginine into N(2)-succinylornithine, ammonia and CO(2). This Aliivibrio salmonicida (strain LFI1238) (Vibrio salmonicida (strain LFI1238)) protein is N-succinylarginine dihydrolase.